Here is a 232-residue protein sequence, read N- to C-terminus: tRNA1(Val) (adenine(37)-N6)-methyltransferase (232 aa).

It belongs to the methyltransferase superfamily. tRNA (adenine-N(6)-)-methyltransferase family.

Its subcellular location is the cytoplasm. The enzyme catalyses adenosine(37) in tRNA1(Val) + S-adenosyl-L-methionine = N(6)-methyladenosine(37) in tRNA1(Val) + S-adenosyl-L-homocysteine + H(+). Functionally, specifically methylates the adenine in position 37 of tRNA(1)(Val) (anticodon cmo5UAC). This Haemophilus influenzae (strain 86-028NP) protein is tRNA1(Val) (adenine(37)-N6)-methyltransferase.